The following is a 40-amino-acid chain: Alpha-1B-glycoprotein (40 aa).

A glycan (N-linked (GlcNAc...) asparagine) is linked at N23.

As to quaternary structure, interacts with CRISP3. As to expression, plasma.

The protein localises to the secreted. This chain is Alpha-1B-glycoprotein (A1BG), found in Sus scrofa (Pig).